We begin with the raw amino-acid sequence, 567 residues long: Cytochrome P450 monooxygenase 79 (567 aa).

Residues 7–24 (ELAILAIVLLVTAVVFYT) traverse the membrane as a helical segment. Asparagine 223 and asparagine 279 each carry an N-linked (GlcNAc...) asparagine glycan. Residue cysteine 475 coordinates heme.

This sequence belongs to the cytochrome P450 family. The cofactor is heme.

It localises to the membrane. It participates in secondary metabolite biosynthesis. In terms of biological role, cytochrome P450 monooxygenase that is able to use dehydroabietic acid as a substrate for oxidation. The chain is Cytochrome P450 monooxygenase 79 from Postia placenta (strain ATCC 44394 / Madison 698-R) (Brown rot fungus).